An 834-amino-acid chain; its full sequence is DNA polymerase I, thermostable (834 aa).

The region spanning Arg176–Gln262 is the 5'-3' exonuclease domain. Residues Glu412–Gly834 are polymerase.

This sequence belongs to the DNA polymerase type-A family.

It carries out the reaction DNA(n) + a 2'-deoxyribonucleoside 5'-triphosphate = DNA(n+1) + diphosphate. Functionally, in addition to polymerase activity, this DNA polymerase exhibits 5'-3' exonuclease activity. This chain is DNA polymerase I, thermostable (polA), found in Thermus thermophilus (strain ATCC 27634 / DSM 579 / HB8).